A 311-amino-acid chain; its full sequence is Delta-1-pyrroline-5-carboxylate reductase kk1I (311 aa).

Residues 1–31 (MTKRESNTLAVLGCGMVFLVSLLDLANRLLG) form the signal peptide. Asn59 carries N-linked (GlcNAc...) asparagine glycosylation.

The protein belongs to the pyrroline-5-carboxylate reductase family.

The protein operates within secondary metabolite biosynthesis. Its function is as follows. Delta-1-pyrroline-5-carboxylate reductase; part of the gene cluster that mediates the biosynthesis of KK-1, a novel cyclic depsipeptide with 10 residues which is a promising active compound with high activity against many plant pathogens, especially Botrytis cinerea. Within the pathway, kk1I catalyzes the synthesis of the L-pipecolic acid residue of KK-1 from delta-1-pyrroline-5-carboxylate (P5C), a metabolic intermediate of lysine. The nonribosomal peptide synthetase (NRPS) kk1B catalyzes the elongation and cyclization of the decapeptide chain composed of 1 D-lactic acid residue (D-Lac), 1 pipecolic acid residue (Pip), 1 aspartic acid residue (Asp), 1 isoleucine residue (Ile), 1 glycine residue (Gly), 1 tyrosine residue (Tyr) and 4 valine residues (Val). The Asp, Ile and 3 Val residues are N-methylated by the 5 methyltransferase domains from the NRPS (found in modules 3, 5, 6, 7 and 9), whereas the Tyr residue is O-methylated by the cluster encoded O-methyltransferase kk1A. The thioesterase kk1J is likely to be involved in the corrective mechanism of peptide chain synthesis. The D-lactate dehydrogenase kk1H is involved in the synthesis of D-lactic acid from pyruvic acid, which is recognized by the A domain of the first kk1B module. The pyrroline-5-carboxylate reductase kk1I is involved in the synthesis of the L-pipecolic acid residue of KK-1 from delta-1-pyrroline-5-carboxylate (P5C), a metabolic intermediate of lysine. It still is unclear how kk1C and kk1D are involved in the production of KK-1. This is Delta-1-pyrroline-5-carboxylate reductase kk1I from Curvularia clavata.